Reading from the N-terminus, the 337-residue chain is 2-oxoglutarate-dependent dioxygenase 19 (337 aa).

The disordered stretch occupies residues 1–25; the sequence is MVAPSRLPSHEEQSAAAAADGSATP. The Fe2OG dioxygenase domain maps to 179-283; the sequence is NLESCFQILV…RMSFVSLIGP (105 aa). Residues histidine 208, aspartate 210, and histidine 264 each contribute to the Fe cation site. Residue arginine 274 participates in 2-oxoglutarate binding.

It belongs to the iron/ascorbate-dependent oxidoreductase family. The cofactor is Fe(2+). L-ascorbate serves as cofactor. As to expression, expressed in shoots.

It is found in the cytoplasm. It catalyses the reaction melatonin + 2-oxoglutarate + O2 = 2-hydroxymelatonin + succinate + CO2. Involved in melatonin degradation. Catalyzes the hydroxylation of melatonin to produce 2-hydroxymelatonin. This is 2-oxoglutarate-dependent dioxygenase 19 from Oryza sativa subsp. japonica (Rice).